Consider the following 217-residue polypeptide: Ribosomal RNA small subunit methyltransferase G (217 aa).

S-adenosyl-L-methionine is bound by residues Gly79, Leu84, 130–131, and Arg148; that span reads IE.

The protein belongs to the methyltransferase superfamily. RNA methyltransferase RsmG family.

Its subcellular location is the cytoplasm. The catalysed reaction is guanosine(527) in 16S rRNA + S-adenosyl-L-methionine = N(7)-methylguanosine(527) in 16S rRNA + S-adenosyl-L-homocysteine. Functionally, specifically methylates the N7 position of guanine in position 527 of 16S rRNA. The protein is Ribosomal RNA small subunit methyltransferase G of Desulfotalea psychrophila (strain LSv54 / DSM 12343).